Consider the following 376-residue polypeptide: Probable ATP-dependent RNA helicase YfmL (376 aa).

Residues 35-205 (AQLIMDGKDV…RELAQEPEVL (171 aa)) enclose the Helicase ATP-binding domain. Residue 48 to 55 (SPTGTGKT) participates in ATP binding. Positions 153-156 (DETD) match the DEAD box motif. Positions 231 to 374 (KLLQKLSRLE…EAVYAGGKLK (144 aa)) constitute a Helicase C-terminal domain.

The protein belongs to the DEAD box helicase family.

It catalyses the reaction ATP + H2O = ADP + phosphate + H(+). Its function is as follows. A probable DEAD-box RNA helicase that plays a role in ribosomal 50S subunit assembly. May be a non-specific RNA helicase. This chain is Probable ATP-dependent RNA helicase YfmL (yfmL), found in Bacillus subtilis (strain 168).